A 298-amino-acid polypeptide reads, in one-letter code: Probable pyridoxal 5'-phosphate synthase subunit SNZ2 (298 aa).

D21 is a D-ribose 5-phosphate binding site. Catalysis depends on K78, which acts as the Schiff-base intermediate with D-ribose 5-phosphate. D-ribose 5-phosphate is bound by residues G150, G213, and G234 to S235.

The protein belongs to the PdxS/SNZ family. Homohexamer. Interacts with THI11.

The enzyme catalyses aldehydo-D-ribose 5-phosphate + D-glyceraldehyde 3-phosphate + L-glutamine = pyridoxal 5'-phosphate + L-glutamate + phosphate + 3 H2O + H(+). It functions in the pathway cofactor biosynthesis; pyridoxal 5'-phosphate biosynthesis. In terms of biological role, catalyzes the formation of pyridoxal 5'-phosphate from ribose 5-phosphate (RBP), glyceraldehyde 3-phosphate (G3P) and ammonia. The ammonia is provided by a SNO isoform. Can also use ribulose 5-phosphate and dihydroxyacetone phosphate as substrates, resulting from enzyme-catalyzed isomerization of RBP and G3P, respectively. The protein is Probable pyridoxal 5'-phosphate synthase subunit SNZ2 (SNZ2) of Saccharomyces cerevisiae (strain ATCC 204508 / S288c) (Baker's yeast).